The chain runs to 271 residues: Dioscorin dioA3 (271 aa).

An N-terminal signal peptide occupies residues methionine 1–serine 21. The Alpha-carbonic anhydrase domain maps to aspartate 28 to glutamate 262. The cysteines at positions 53 and 212 are disulfide-linked. Histidine 94 acts as the Proton acceptor in catalysis. L-ascorbate contacts are provided by residues aspartate 95, histidine 120–histidine 122, glutamine 139, and threonine 208–alanine 209.

Belongs to the alpha-carbonic anhydrase family. In terms of assembly, monomer. Homodimer. Post-translationally, not glycosylated. As to expression, expressed in tuber (at protein level).

It carries out the reaction hydrogencarbonate + H(+) = CO2 + H2O. It catalyses the reaction 2 monodehydro-L-ascorbate radical + NADH + H(+) = 2 L-ascorbate + NAD(+). With respect to regulation, the carbonate dehydratase activity is not substantially changed by the addition of Zn(2+). Storage protein of tuber. Involved in protection against oxidative stress. Has carbonate dehydratase, trypsin inhibitor, dehydroascorbate (DHA) reductase and monodehydroascorbate (MDA) reductase activities. Catalyzes the reactions of carbonate dehydratase and DHA reductase independently of zinc and glutathione (GSH). The coupled reaction is capable of recycling a plant antioxidant ascorbate using ubiquitous compounds H(2)O and CO(2). Exhibits antioxidant activity. Able to scavenge 1,1-diphenyl-2-picrylhydrazyl (DPPH) radical. Exhibits immunomodulatory activity. Activates Toll-like receptor 4 signaling pathways by up-regulating the gene expression of pro-inflammatory cytokines, such as tumor necrosis factor alpha, interleukin-1 beta and interleukin-6, and chemokines RANTES and MCP-1, in mouse RAW 264.7 macrophages. Stimulates the phagocytosis of E.coli by the LPS-treated mouse macrophages. This Dioscorea japonica (Japanese yam) protein is Dioscorin dioA3.